Here is a 153-residue protein sequence, read N- to C-terminus: MNARRRLWSLLMLILAVGTAATLTIMALRRNLTYLYMPSEVLRGDTAQQTHFRLGGIVEKGSFQRTSGTLHTRFIVTDGNARLQVRYARILPDLFREGQAVVATGQMQHGIFIAENILARHNETYTPRTLTNKMQPTPTQHTHLDTPIAQTTP.

At 1–6 the chain is on the cytoplasmic side; it reads MNARRR. Residues 7-27 traverse the membrane as a helical; Signal-anchor for type II membrane protein segment; that stretch reads LWSLLMLILAVGTAATLTIMA. At 28–153 the chain is on the periplasmic side; sequence LRRNLTYLYM…LDTPIAQTTP (126 aa). The heme site is built by His121 and Tyr125. The segment covering 130–141 has biased composition (polar residues); the sequence is LTNKMQPTPTQH. Residues 130–153 form a disordered region; it reads LTNKMQPTPTQHTHLDTPIAQTTP.

Belongs to the CcmE/CycJ family.

It localises to the cell inner membrane. Its function is as follows. Heme chaperone required for the biogenesis of c-type cytochromes. Transiently binds heme delivered by CcmC and transfers the heme to apo-cytochromes in a process facilitated by CcmF and CcmH. The sequence is that of Cytochrome c-type biogenesis protein CcmE from Xylella fastidiosa (strain 9a5c).